The chain runs to 258 residues: F-box/SPRY domain-containing protein 1 (258 aa).

In terms of domain architecture, F-box spans Thr-6–Gln-54. One can recognise a B30.2/SPRY domain in the interval Phe-64–Leu-256.

It belongs to the FBXO45/Fsn family. As to quaternary structure, component of an E3 ubiquitin ligase complex composed of hiw and Fsn.

Its subcellular location is the synapse. The protein operates within protein modification; protein ubiquitination. Functionally, required in the presynaptic motoneuron to down-regulate the levels of wnd and restrain synaptic terminal growth at the neuromuscular junction (NMJ). The protein is F-box/SPRY domain-containing protein 1 of Culex quinquefasciatus (Southern house mosquito).